Reading from the N-terminus, the 150-residue chain is Large ribosomal subunit protein bL9 (150 aa).

Belongs to the bacterial ribosomal protein bL9 family.

Binds to the 23S rRNA. The polypeptide is Large ribosomal subunit protein bL9 (Pectobacterium carotovorum subsp. carotovorum (strain PC1)).